The sequence spans 89 residues: Phosphocarrier protein HPr (89 aa).

The 89-residue stretch at 1-89 (MERTVTVVPE…DILSTPEAKQ (89 aa)) folds into the HPr domain. Catalysis depends on histidine 14, which acts as the Pros-phosphohistidine intermediate. Phosphoserine; by HPrK/P is present on serine 47.

This sequence belongs to the HPr family.

It localises to the cytoplasm. With respect to regulation, phosphorylation on Ser-47 inhibits the phosphoryl transfer from enzyme I to HPr. General (non sugar-specific) component of the phosphoenolpyruvate-dependent sugar phosphotransferase system (sugar PTS). This major carbohydrate active-transport system catalyzes the phosphorylation of incoming sugar substrates concomitantly with their translocation across the cell membrane. The phosphoryl group from phosphoenolpyruvate (PEP) is transferred to the phosphoryl carrier protein HPr by enzyme I. Phospho-HPr then transfers it to the PTS EIIA domain. Is involved in fructose transport. This chain is Phosphocarrier protein HPr (ptsH1), found in Haloferax volcanii (strain ATCC 29605 / DSM 3757 / JCM 8879 / NBRC 14742 / NCIMB 2012 / VKM B-1768 / DS2) (Halobacterium volcanii).